Here is a 297-residue protein sequence, read N- to C-terminus: Protease HtpX homolog (297 aa).

The next 2 membrane-spanning stretches (helical) occupy residues 14 to 34 and 38 to 58; these read IVLLFVFFILVALVGAAVGYL and SLETGVVAAIVIGAIYTIIMV. His144 lines the Zn(2+) pocket. Glu145 is an active-site residue. His148 is a Zn(2+) binding site. 2 consecutive transmembrane segments (helical) span residues 159–179 and 199–219; these read IALALAAAITLLTNIGGNWWF and ILLLVFSILMMVLAPLAAAAI. Glu228 lines the Zn(2+) pocket.

Belongs to the peptidase M48B family. It depends on Zn(2+) as a cofactor.

It localises to the cell membrane. In Leuconostoc mesenteroides subsp. mesenteroides (strain ATCC 8293 / DSM 20343 / BCRC 11652 / CCM 1803 / JCM 6124 / NCDO 523 / NBRC 100496 / NCIMB 8023 / NCTC 12954 / NRRL B-1118 / 37Y), this protein is Protease HtpX homolog.